The following is a 58-amino-acid chain: Large ribosomal subunit protein eL24 (58 aa).

C6, C9, C32, and C36 together coordinate Zn(2+). The C4-type zinc-finger motif lies at 6–36; the sequence is CSFCGYDIEPGTGKMYVRRDGRVFYFCSGKC.

It belongs to the eukaryotic ribosomal protein eL24 family. As to quaternary structure, part of the 50S ribosomal subunit. Forms a cluster with proteins L3 and L14. Zn(2+) serves as cofactor.

Functionally, binds to the 23S rRNA. The polypeptide is Large ribosomal subunit protein eL24 (Archaeoglobus fulgidus (strain ATCC 49558 / DSM 4304 / JCM 9628 / NBRC 100126 / VC-16)).